A 432-amino-acid chain; its full sequence is Glutamate-1-semialdehyde 2,1-aminomutase (432 aa).

The residue at position 270 (Lys-270) is an N6-(pyridoxal phosphate)lysine.

This sequence belongs to the class-III pyridoxal-phosphate-dependent aminotransferase family. HemL subfamily. In terms of assembly, homodimer. Pyridoxal 5'-phosphate serves as cofactor.

The protein resides in the cytoplasm. It carries out the reaction (S)-4-amino-5-oxopentanoate = 5-aminolevulinate. Its pathway is porphyrin-containing compound metabolism; protoporphyrin-IX biosynthesis; 5-aminolevulinate from L-glutamyl-tRNA(Glu): step 2/2. This Acinetobacter baumannii (strain ACICU) protein is Glutamate-1-semialdehyde 2,1-aminomutase.